Here is a 369-residue protein sequence, read N- to C-terminus: Phospho-N-acetylmuramoyl-pentapeptide-transferase (369 aa).

The next 10 helical transmembrane spans lie at 2 to 22 (IAIL…TPFF), 54 to 74 (GLVI…FLGL), 80 to 100 (GLLV…DDIL), 113 to 133 (FYKV…TFLV), 158 to 178 (ALFS…LLWI), 195 to 215 (LDGL…VIGF), 241 to 261 (PLDM…FLWW), 268 to 288 (IMMG…LSIL), 293 to 313 (LLFL…ILQI), and 347 to 367 (FWII…ADWL).

It belongs to the glycosyltransferase 4 family. MraY subfamily. Mg(2+) is required as a cofactor.

It localises to the cell membrane. The enzyme catalyses UDP-N-acetyl-alpha-D-muramoyl-L-alanyl-gamma-D-glutamyl-meso-2,6-diaminopimeloyl-D-alanyl-D-alanine + di-trans,octa-cis-undecaprenyl phosphate = di-trans,octa-cis-undecaprenyl diphospho-N-acetyl-alpha-D-muramoyl-L-alanyl-D-glutamyl-meso-2,6-diaminopimeloyl-D-alanyl-D-alanine + UMP. Its pathway is cell wall biogenesis; peptidoglycan biosynthesis. Catalyzes the initial step of the lipid cycle reactions in the biosynthesis of the cell wall peptidoglycan: transfers peptidoglycan precursor phospho-MurNAc-pentapeptide from UDP-MurNAc-pentapeptide onto the lipid carrier undecaprenyl phosphate, yielding undecaprenyl-pyrophosphoryl-MurNAc-pentapeptide, known as lipid I. In Tropheryma whipplei (strain TW08/27) (Whipple's bacillus), this protein is Phospho-N-acetylmuramoyl-pentapeptide-transferase.